The sequence spans 431 residues: Serine/threonine-protein kinase Sgk1 (431 aa).

The necessary for localization to the mitochondria stretch occupies residues 1–60; sequence MTVKTEAAKGTLTYSRMRGMVAILIAFMKQRRMGLNDFIQKIANNSYACKHPEVQSILKI. Residues 66–92 are disordered; sequence PELMNANPSPPPSPSQQINLGPSSNPH. Ser-74 is subject to Phosphoserine. Ser-78 carries the post-translational modification Phosphoserine; by MAPK7. Residues 81-91 show a composition bias toward polar residues; the sequence is QQINLGPSSNP. Positions 98-355 constitute a Protein kinase domain; it reads FHFLKVIGKG…FMEIKSHVFF (258 aa). ATP contacts are provided by residues 104 to 112 and Lys-127; that span reads IGKGSFGKV. The Nuclear localization signal signature appears at 131–141; that stretch reads KKAILKKKEEK. Asp-222 acts as the Proton acceptor in catalysis. Thr-256 is subject to Phosphothreonine; by PDPK1. One can recognise an AGC-kinase C-terminal domain in the interval 356–431; it reads SLINWDDLIN…SYAPPTDSFL (76 aa). Thr-369 is subject to Phosphothreonine; by PKA. Residues Ser-397, Ser-401, and Ser-422 each carry the phosphoserine modification.

It belongs to the protein kinase superfamily. AGC Ser/Thr protein kinase family. Homodimer; disulfide-linked. Forms a trimeric complex with FBXW7 and NOTCH1. Interacts with MAPK3/ERK1, MAPK1/ERK2, MAP2K1/MEK1, MAP2K2/MEK2, NEDD4, NEDD4L, MAPT/TAU, MAPK7, CREB1, SLC9A3R2/NHERF2 and KCNJ1/ROMK1. Associates with the mammalian target of rapamycin complex 2 (mTORC2) via an interaction with MAPKAP1/SIN1. Regulated by phosphorylation. Activated by phosphorylation on Ser-422 by mTORC2, transforming it into a substrate for PDPK1 which phosphorylates it on Thr-256. Phosphorylation on Ser-397 and Ser-401 are also essential for its activity. Phosphorylation on Ser-78 by MAPK7 is required for growth factor-induced cell cycle progression. In terms of processing, ubiquitinated by NEDD4L; which promotes proteasomal degradation. Ubiquitinated by SYVN1 at the endoplasmic reticulum; which promotes rapid proteasomal degradation and maintains a high turnover rate in resting cells. Isoform 2 shows enhanced stability. As to expression, expressed in most tissues with highest levels in the pancreas, followed by placenta, kidney and lung. Isoform 2 is strongly expressed in brain and pancreas, weaker in heart, placenta, lung, liver and skeletal muscle.

The protein resides in the cytoplasm. It localises to the nucleus. Its subcellular location is the endoplasmic reticulum membrane. It is found in the cell membrane. The protein localises to the mitochondrion. The catalysed reaction is L-seryl-[protein] + ATP = O-phospho-L-seryl-[protein] + ADP + H(+). The enzyme catalyses L-threonyl-[protein] + ATP = O-phospho-L-threonyl-[protein] + ADP + H(+). Two specific sites, one in the kinase domain (Thr-256) and the other in the C-terminal regulatory region (Ser-422), need to be phosphorylated for its full activation. Phosphorylation at Ser-397 and Ser-401 are also essential for its activity. Activated by WNK1, WNK2, WNK3 and WNK4; which promote phosphorylation by mTORC2. In terms of biological role, serine/threonine-protein kinase which is involved in the regulation of a wide variety of ion channels, membrane transporters, cellular enzymes, transcription factors, neuronal excitability, cell growth, proliferation, survival, migration and apoptosis. Plays an important role in cellular stress response. Contributes to regulation of renal Na(+) retention, renal K(+) elimination, salt appetite, gastric acid secretion, intestinal Na(+)/H(+) exchange and nutrient transport, insulin-dependent salt sensitivity of blood pressure, salt sensitivity of peripheral glucose uptake, cardiac repolarization and memory consolidation. Up-regulates Na(+) channels: SCNN1A/ENAC, SCN5A and ASIC1/ACCN2, K(+) channels: KCNJ1/ROMK1, KCNA1-5, KCNQ1-5 and KCNE1, epithelial Ca(2+) channels: TRPV5 and TRPV6, chloride channels: BSND, CLCN2 and CFTR, glutamate transporters: SLC1A3/EAAT1, SLC1A2 /EAAT2, SLC1A1/EAAT3, SLC1A6/EAAT4 and SLC1A7/EAAT5, amino acid transporters: SLC1A5/ASCT2, SLC38A1/SN1 and SLC6A19, creatine transporter: SLC6A8, Na(+)/dicarboxylate cotransporter: SLC13A2/NADC1, Na(+)-dependent phosphate cotransporter: SLC34A2/NAPI-2B, glutamate receptor: GRIK2/GLUR6. Up-regulates carriers: SLC9A3/NHE3, SLC12A1/NKCC2, SLC12A3/NCC, SLC5A3/SMIT, SLC2A1/GLUT1, SLC5A1/SGLT1 and SLC15A2/PEPT2. Regulates enzymes: GSK3A/B, PMM2 and Na(+)/K(+) ATPase, and transcription factors: CTNNB1 and nuclear factor NF-kappa-B. Stimulates sodium transport into epithelial cells by enhancing the stability and expression of SCNN1A/ENAC. This is achieved by phosphorylating the NEDD4L ubiquitin E3 ligase, promoting its interaction with 14-3-3 proteins, thereby preventing it from binding to SCNN1A/ENAC and targeting it for degradation. Regulates store-operated Ca(+2) entry (SOCE) by stimulating ORAI1 and STIM1. Regulates KCNJ1/ROMK1 directly via its phosphorylation or indirectly via increased interaction with SLC9A3R2/NHERF2. Phosphorylates MDM2 and activates MDM2-dependent ubiquitination of p53/TP53. Phosphorylates MAPT/TAU and mediates microtubule depolymerization and neurite formation in hippocampal neurons. Phosphorylates SLC2A4/GLUT4 and up-regulates its activity. Phosphorylates APBB1/FE65 and promotes its localization to the nucleus. Phosphorylates MAPK1/ERK2 and activates it by enhancing its interaction with MAP2K1/MEK1 and MAP2K2/MEK2. Phosphorylates FBXW7 and plays an inhibitory role in the NOTCH1 signaling. Phosphorylates FOXO1 resulting in its relocalization from the nucleus to the cytoplasm. Phosphorylates FOXO3, promoting its exit from the nucleus and interference with FOXO3-dependent transcription. Phosphorylates BRAF and MAP3K3/MEKK3 and inhibits their activity. Phosphorylates SLC9A3/NHE3 in response to dexamethasone, resulting in its activation and increased localization at the cell membrane. Phosphorylates CREB1. Necessary for vascular remodeling during angiogenesis. Sustained high levels and activity may contribute to conditions such as hypertension and diabetic nephropathy. Isoform 2 exhibited a greater effect on cell plasma membrane expression of SCNN1A/ENAC and Na(+) transport than isoform 1. The polypeptide is Serine/threonine-protein kinase Sgk1 (SGK1) (Homo sapiens (Human)).